The following is a 499-amino-acid chain: NAD(P)H-quinone oxidoreductase chain 4, chloroplastic (499 aa).

14 helical membrane passes run 4-24 (LPWL…IPLF), 31-51 (MIRW…TYIF), 87-107 (IGLI…AWPV), 113-130 (LLHF…GLFA), 134-154 (ILLF…LLSM), 167-187 (FLLY…SMGL), 211-231 (ILLY…FPLH), 242-262 (HYST…YGLI), 274-294 (SLFS…AALT), 305-325 (IAYS…SMTY), 330-350 (GAIL…FLVG), 386-406 (LALP…GVIT), 416-436 (IIIT…LLSM), and 462-482 (LFIL…PDLV).

The protein belongs to the complex I subunit 4 family.

The protein resides in the plastid. Its subcellular location is the chloroplast thylakoid membrane. It carries out the reaction a plastoquinone + NADH + (n+1) H(+)(in) = a plastoquinol + NAD(+) + n H(+)(out). The catalysed reaction is a plastoquinone + NADPH + (n+1) H(+)(in) = a plastoquinol + NADP(+) + n H(+)(out). This is NAD(P)H-quinone oxidoreductase chain 4, chloroplastic from Cryptomeria japonica (Japanese cedar).